The chain runs to 478 residues: Bifunctional protein HldE (478 aa).

The interval 1–318 (MKVTLPDFRQ…ENAIRGRADT (318 aa)) is ribokinase. 195–198 (NLSE) lines the ATP pocket. Asp-264 is a catalytic residue. The interval 344–478 (MTNGCFDILH…NMIKASTSQS (135 aa)) is cytidylyltransferase.

The protein in the N-terminal section; belongs to the carbohydrate kinase PfkB family. In the C-terminal section; belongs to the cytidylyltransferase family. In terms of assembly, homodimer.

The enzyme catalyses D-glycero-beta-D-manno-heptose 7-phosphate + ATP = D-glycero-beta-D-manno-heptose 1,7-bisphosphate + ADP + H(+). It catalyses the reaction D-glycero-beta-D-manno-heptose 1-phosphate + ATP + H(+) = ADP-D-glycero-beta-D-manno-heptose + diphosphate. It participates in nucleotide-sugar biosynthesis; ADP-L-glycero-beta-D-manno-heptose biosynthesis; ADP-L-glycero-beta-D-manno-heptose from D-glycero-beta-D-manno-heptose 7-phosphate: step 1/4. It functions in the pathway nucleotide-sugar biosynthesis; ADP-L-glycero-beta-D-manno-heptose biosynthesis; ADP-L-glycero-beta-D-manno-heptose from D-glycero-beta-D-manno-heptose 7-phosphate: step 3/4. Catalyzes the phosphorylation of D-glycero-D-manno-heptose 7-phosphate at the C-1 position to selectively form D-glycero-beta-D-manno-heptose-1,7-bisphosphate. Functionally, catalyzes the ADP transfer from ATP to D-glycero-beta-D-manno-heptose 1-phosphate, yielding ADP-D-glycero-beta-D-manno-heptose. The chain is Bifunctional protein HldE from Pectobacterium atrosepticum (strain SCRI 1043 / ATCC BAA-672) (Erwinia carotovora subsp. atroseptica).